Consider the following 541-residue polypeptide: Glutamyl-tRNA(Gln) amidotransferase subunit B, mitochondrial (541 aa).

Belongs to the GatB/GatE family. GatB subfamily. Subunit of the heterotrimeric GatFAB amidotransferase (AdT) complex, composed of A, B and F subunits.

The protein localises to the mitochondrion. The catalysed reaction is L-glutamyl-tRNA(Gln) + L-glutamine + ATP + H2O = L-glutaminyl-tRNA(Gln) + L-glutamate + ADP + phosphate + H(+). In terms of biological role, allows the formation of correctly charged Gln-tRNA(Gln) through the transamidation of misacylated Glu-tRNA(Gln) in the mitochondria. The reaction takes place in the presence of glutamine and ATP through an activated gamma-phospho-Glu-tRNA(Gln). The chain is Glutamyl-tRNA(Gln) amidotransferase subunit B, mitochondrial from Saccharomyces cerevisiae (strain YJM789) (Baker's yeast).